Consider the following 445-residue polypeptide: Argininosuccinate synthase (445 aa).

Residues Ala-17 to Ser-25 and Ala-43 each bind ATP. Tyr-99 contributes to the L-citrulline binding site. ATP-binding residues include Gly-129 and Thr-131. L-aspartate-binding residues include Thr-131, Asn-135, and Asp-136. Asn-135 serves as a coordination point for L-citrulline. Asp-136 is an ATP binding site. Positions 139 and 192 each coordinate L-citrulline. Asp-194 provides a ligand contact to ATP. Residues Thr-201, Glu-203, and Glu-280 each coordinate L-citrulline.

It belongs to the argininosuccinate synthase family. Type 2 subfamily. Homotetramer.

The protein localises to the cytoplasm. The enzyme catalyses L-citrulline + L-aspartate + ATP = 2-(N(omega)-L-arginino)succinate + AMP + diphosphate + H(+). It functions in the pathway amino-acid biosynthesis; L-arginine biosynthesis; L-arginine from L-ornithine and carbamoyl phosphate: step 2/3. In Burkholderia cenocepacia (strain ATCC BAA-245 / DSM 16553 / LMG 16656 / NCTC 13227 / J2315 / CF5610) (Burkholderia cepacia (strain J2315)), this protein is Argininosuccinate synthase.